The following is a 284-amino-acid chain: Protein pxr1 (284 aa).

The G-patch domain maps to 25–71; it reads TNRLGFKLLSSYGWVNGNGLGEKQHGRIHNIKVSLKDDTLGIGAKAT. The segment at 149–253 is disordered; sequence DEDRVCEDAS…KVKEGNRPAS (105 aa). Ser159 and Ser160 each carry phosphoserine. Composition is skewed to basic residues over residues 166–181 and 196–206; these read EKRK…KKKT and TKKKKKEHKKK. 2 stretches are compositionally biased toward basic and acidic residues: residues 207-224 and 233-249; these read DKES…DKEE and KDKP…KEGN.

The protein belongs to the PINX1 family.

The protein localises to the nucleus. Its subcellular location is the nucleolus. Its function is as follows. Involved in rRNA-processing at A0, A1 and A2 sites and negatively regulates telomerase. This chain is Protein pxr1 (pxr1), found in Schizosaccharomyces pombe (strain 972 / ATCC 24843) (Fission yeast).